The chain runs to 543 residues: CTP synthase (543 aa).

Positions 1-267 are amidoligase domain; it reads MAKFVFVTGG…CREVLDVLNL (267 aa). CTP is bound at residue Ser13. Ser13 is a binding site for UTP. ATP is bound at residue 14 to 19; that stretch reads SIGKGI. Residue Tyr54 participates in L-glutamine binding. Asp71 is a binding site for ATP. Residues Asp71 and Glu141 each coordinate Mg(2+). Residues 148–150, 188–193, and Lys224 each bind CTP; these read DIE and KTKPTQ. UTP is bound by residues 188–193 and Lys224; that span reads KTKPTQ. Residues 292-534 enclose the Glutamine amidotransferase type-1 domain; that stretch reads KVALVGKYVQ…IEAAQQRLPN (243 aa). Gly354 is a binding site for L-glutamine. The active-site Nucleophile; for glutamine hydrolysis is the Cys381. L-glutamine is bound by residues 382–385, Glu405, and Arg462; that span reads LGMQ. Catalysis depends on residues His507 and Glu509.

This sequence belongs to the CTP synthase family. In terms of assembly, homotetramer.

It catalyses the reaction UTP + L-glutamine + ATP + H2O = CTP + L-glutamate + ADP + phosphate + 2 H(+). The enzyme catalyses L-glutamine + H2O = L-glutamate + NH4(+). The catalysed reaction is UTP + NH4(+) + ATP = CTP + ADP + phosphate + 2 H(+). Its pathway is pyrimidine metabolism; CTP biosynthesis via de novo pathway; CTP from UDP: step 2/2. Allosterically activated by GTP, when glutamine is the substrate; GTP has no effect on the reaction when ammonia is the substrate. The allosteric effector GTP functions by stabilizing the protein conformation that binds the tetrahedral intermediate(s) formed during glutamine hydrolysis. Inhibited by the product CTP, via allosteric rather than competitive inhibition. Functionally, catalyzes the ATP-dependent amination of UTP to CTP with either L-glutamine or ammonia as the source of nitrogen. Regulates intracellular CTP levels through interactions with the four ribonucleotide triphosphates. The polypeptide is CTP synthase (Synechococcus sp. (strain WH7803)).